The following is a 371-amino-acid chain: Chaperone protein DnaJ (371 aa).

The J domain maps to 5-69 (DYYEVLGLSK…QKRAQYDQFG (65 aa)). A CR-type zinc finger spans residues 133–215 (GKELNVEIPV…CHGSSKVRKR (83 aa)). Positions 146, 149, 163, 166, 189, 192, 203, and 206 each coordinate Zn(2+). CXXCXGXG motif repeat units follow at residues 146 to 153 (CDTCKGSG), 163 to 170 (CKHCSGSG), 189 to 196 (CGHCSGTG), and 203 to 210 (CTTCHGSS).

The protein belongs to the DnaJ family. In terms of assembly, homodimer. The cofactor is Zn(2+).

It is found in the cytoplasm. Its function is as follows. Participates actively in the response to hyperosmotic and heat shock by preventing the aggregation of stress-denatured proteins and by disaggregating proteins, also in an autonomous, DnaK-independent fashion. Unfolded proteins bind initially to DnaJ; upon interaction with the DnaJ-bound protein, DnaK hydrolyzes its bound ATP, resulting in the formation of a stable complex. GrpE releases ADP from DnaK; ATP binding to DnaK triggers the release of the substrate protein, thus completing the reaction cycle. Several rounds of ATP-dependent interactions between DnaJ, DnaK and GrpE are required for fully efficient folding. Also involved, together with DnaK and GrpE, in the DNA replication of plasmids through activation of initiation proteins. In Bacillus cereus (strain ATCC 14579 / DSM 31 / CCUG 7414 / JCM 2152 / NBRC 15305 / NCIMB 9373 / NCTC 2599 / NRRL B-3711), this protein is Chaperone protein DnaJ.